A 135-amino-acid chain; its full sequence is uncharacterized protein (135 aa).

This is an uncharacterized protein from Commelina yellow mottle virus (CoYMV).